Consider the following 184-residue polypeptide: Casparian strip membrane protein 3 (184 aa).

Residues Met1–Gly22 are Cytoplasmic-facing. The helical transmembrane segment at Leu23–Ile43 threads the bilayer. The Extracellular segment spans residues Ala44–Thr72. Asn49 carries N-linked (GlcNAc...) asparagine glycosylation. Residues Phe73–Ile93 form a helical membrane-spanning segment. The Cytoplasmic segment spans residues Val94–Arg105. A helical transmembrane segment spans residues Leu106–Gly126. The Extracellular segment spans residues Ala127–Ser159. N-linked (GlcNAc...) asparagine glycosylation is present at Asn137. Residues Leu160–Ala180 traverse the membrane as a helical segment. Residues Leu181–Arg184 lie on the Cytoplasmic side of the membrane.

It belongs to the Casparian strip membrane proteins (CASP) family. In terms of assembly, homodimer and heterodimers.

Its subcellular location is the cell membrane. Its function is as follows. Regulates membrane-cell wall junctions and localized cell wall deposition. Required for establishment of the Casparian strip membrane domain (CSD) and the subsequent formation of Casparian strips, a cell wall modification of the root endodermis that determines an apoplastic barrier between the intraorganismal apoplasm and the extraorganismal apoplasm and prevents lateral diffusion. This is Casparian strip membrane protein 3 from Brachypodium distachyon (Purple false brome).